The following is a 393-amino-acid chain: MDYKEQSHIIPTYKRFDIVLEKGQGVYLFDDKAKKYLDFSSGIGVCALGYNHAKFNAKIKAQVDKLLHTSNLYYNENIAAAAKNLAKASALERVFFTNSGTESIEGAMKTARKYAFNKGVKGGQFIAFKHSFHGRTLGALSLTANEKYQKPFKPLISGVKFAKYNDISSVEKLVNEKTCAIILESVQGEGGINPANKDFYKALRKLCDEKDILLIADEIQCGMGRSGKFFAYEHAQILPDIMTSAKALGCGLSVGAFVINQKVASNSLEAGDHGSTYGGNPLVCAGVNAVFEIFKEEKILENVNKLTPYLEQSLDELINEFDFCKKRKGLGFMQGLSLDKSVKVAKVIQKCQENALLLISCGENDLRFLPPLILQKEHIDEMSEKLRKALKSF.

Pyridoxal 5'-phosphate-binding positions include 100 to 101 (GT) and phenylalanine 132. Arginine 135 contributes to the N(2)-acetyl-L-ornithine binding site. Residue 217-220 (DEIQ) participates in pyridoxal 5'-phosphate binding. At lysine 246 the chain carries N6-(pyridoxal phosphate)lysine. Residue serine 275 participates in N(2)-acetyl-L-ornithine binding. Pyridoxal 5'-phosphate is bound at residue threonine 276.

This sequence belongs to the class-III pyridoxal-phosphate-dependent aminotransferase family. ArgD subfamily. In terms of assembly, homodimer. The cofactor is pyridoxal 5'-phosphate.

It is found in the cytoplasm. It carries out the reaction N(2)-acetyl-L-ornithine + 2-oxoglutarate = N-acetyl-L-glutamate 5-semialdehyde + L-glutamate. Its pathway is amino-acid biosynthesis; L-arginine biosynthesis; N(2)-acetyl-L-ornithine from L-glutamate: step 4/4. This Campylobacter jejuni subsp. jejuni serotype O:2 (strain ATCC 700819 / NCTC 11168) protein is Acetylornithine aminotransferase.